The chain runs to 374 residues: Tomoregulin-2 (374 aa).

The first 39 residues, Met1–Ala39, serve as a signal peptide directing secretion. Over Ala40–Val320 the chain is Extracellular. Asn55 carries an N-linked (GlcNAc...) asparagine glycan. 2 consecutive Kazal-like domains span residues Val90 to Thr137 and Val181 to Asp229. 9 cysteine pairs are disulfide-bonded: Cys91–Cys121, Cys95–Cys114, Cys103–Cys135, Cys182–Cys213, Cys186–Cys206, Cys195–Cys227, Cys265–Cys278, Cys273–Cys289, and Cys291–Cys300. Residues His261–Glu301 form the EGF-like domain. Residues Lys303–Val320 are required for shedding. A helical membrane pass occupies residues Leu321–Ile341. The Cytoplasmic segment spans residues Thr342–Ile374. The interval Arg353 to Ile374 is disordered. Positions Gln356–Ile374 are enriched in polar residues.

The protein belongs to the tomoregulin family. O-glycosylated; contains chondroitin sulfate glycosaminoglycans. Post-translationally, a soluble form (TMEFF2-ECD) is produced by proteolytic shedding. This shedding can be induced by phorbol ester or pro-inflammatory cytokines such as TNFalpha, and is mediated by a metalloproteinase ADAM.

Its subcellular location is the membrane. In terms of biological role, may be a survival factor for hippocampal and mesencephalic neurons. The shedded form may up-regulate cell proliferation. The polypeptide is Tomoregulin-2 (TMEFF2) (Bos taurus (Bovine)).